The chain runs to 135 residues: CDGSH iron-sulfur domain-containing protein 2A (135 aa).

Residues 1–37 lie on the Lumenal side of the membrane; sequence MVLETISRIIKIQLPAYLKKLPLPETIGGFARLTVSE. A helical transmembrane segment spans residues 38 to 60; it reads WLRLLPLLGILALLGYLTIRPFL. Topologically, residues 61-135 are cytoplasmic; the sequence is PKKKKQKDSL…GPLILKKKIL (75 aa). [2Fe-2S] cluster-binding residues include Cys-99, Cys-101, Cys-110, and His-114.

This sequence belongs to the CISD protein family. CISD2 subfamily. Homodimer. It depends on [2Fe-2S] cluster as a cofactor.

Its subcellular location is the endoplasmic reticulum membrane. The protein resides in the mitochondrion outer membrane. Regulator of autophagy that contributes to antagonize becn1-mediated cellular autophagy at the endoplasmic reticulum. Participates in the interaction of bcl2 with becn1 and is required for bcl2-mediated depression of endoplasmic reticulum Ca(2+) stores during autophagy. The polypeptide is CDGSH iron-sulfur domain-containing protein 2A (cisd2a) (Salmo salar (Atlantic salmon)).